Consider the following 102-residue polypeptide: Putative ubiquitin-like protein FUBI-like protein ENSP00000310146 (102 aa).

The region spanning Leu23–Val99 is the Ubiquitin-like domain.

The polypeptide is Putative ubiquitin-like protein FUBI-like protein ENSP00000310146 (Homo sapiens (Human)).